Consider the following 257-residue polypeptide: RING-H2 finger protein ATL5 (257 aa).

Residues 28 to 48 (IMLASVIILFVAVILILCFHS) form a helical membrane-spanning segment. Residues 113–155 (CSVCLSEFEEDDEGRVLPKCGHVFHVDCIDTWFRSRSSCPLCR) form an RING-type; atypical zinc finger. Residues 181 to 209 (EDTEAGSSSSSDESESSTPSSSSGSPVRF) form a disordered region. Positions 185 to 206 (AGSSSSSDESESSTPSSSSGSP) are enriched in low complexity.

This sequence belongs to the RING-type zinc finger family. ATL subfamily.

It localises to the membrane. The enzyme catalyses S-ubiquitinyl-[E2 ubiquitin-conjugating enzyme]-L-cysteine + [acceptor protein]-L-lysine = [E2 ubiquitin-conjugating enzyme]-L-cysteine + N(6)-ubiquitinyl-[acceptor protein]-L-lysine.. Its pathway is protein modification; protein ubiquitination. This is RING-H2 finger protein ATL5 (ATL5) from Arabidopsis thaliana (Mouse-ear cress).